A 901-amino-acid polypeptide reads, in one-letter code: Protein translocase subunit SecA (901 aa).

ATP is bound by residues Q89, 107-111, and D502; that span reads GEGKT. The Zn(2+) site is built by C884, C886, C895, and H896.

It belongs to the SecA family. As to quaternary structure, monomer and homodimer. Part of the essential Sec protein translocation apparatus which comprises SecA, SecYEG and auxiliary proteins SecDF-YajC and YidC. Zn(2+) serves as cofactor.

The protein resides in the cell inner membrane. The protein localises to the cytoplasm. The catalysed reaction is ATP + H2O + cellular proteinSide 1 = ADP + phosphate + cellular proteinSide 2.. In terms of biological role, part of the Sec protein translocase complex. Interacts with the SecYEG preprotein conducting channel. Has a central role in coupling the hydrolysis of ATP to the transfer of proteins into and across the cell membrane, serving both as a receptor for the preprotein-SecB complex and as an ATP-driven molecular motor driving the stepwise translocation of polypeptide chains across the membrane. In Sinorhizobium fredii (strain NBRC 101917 / NGR234), this protein is Protein translocase subunit SecA.